A 145-amino-acid polypeptide reads, in one-letter code: D-aminoacyl-tRNA deacylase (145 aa).

The Gly-cisPro motif, important for rejection of L-amino acids motif lies at 137–138 (GP).

Belongs to the DTD family. Homodimer.

The protein resides in the cytoplasm. The catalysed reaction is glycyl-tRNA(Ala) + H2O = tRNA(Ala) + glycine + H(+). It carries out the reaction a D-aminoacyl-tRNA + H2O = a tRNA + a D-alpha-amino acid + H(+). Functionally, an aminoacyl-tRNA editing enzyme that deacylates mischarged D-aminoacyl-tRNAs. Also deacylates mischarged glycyl-tRNA(Ala), protecting cells against glycine mischarging by AlaRS. Acts via tRNA-based rather than protein-based catalysis; rejects L-amino acids rather than detecting D-amino acids in the active site. By recycling D-aminoacyl-tRNA to D-amino acids and free tRNA molecules, this enzyme counteracts the toxicity associated with the formation of D-aminoacyl-tRNA entities in vivo and helps enforce protein L-homochirality. This is D-aminoacyl-tRNA deacylase from Streptomyces avermitilis (strain ATCC 31267 / DSM 46492 / JCM 5070 / NBRC 14893 / NCIMB 12804 / NRRL 8165 / MA-4680).